A 402-amino-acid chain; its full sequence is Fructose-1,6-bisphosphatase, chloroplastic (402 aa).

The transit peptide at 1 to 50 directs the protein to the chloroplast; the sequence is MAAATASTQLIFSKPCSPSRLCPFQLCVFDTKQVLSSGRRRHVGGSGVRC. Residues glutamate 127, glutamate 156, aspartate 177, leucine 179, and aspartate 180 each contribute to the Mg(2+) site. Residue 180 to 183 coordinates substrate; that stretch reads DGSS. A disulfide bridge links cysteine 221 with cysteine 226. Substrate contacts are provided by asparagine 285, tyrosine 317, tyrosine 335, tyrosine 337, and lysine 347. Glutamate 353 is a binding site for Mg(2+).

The protein belongs to the FBPase class 1 family. In terms of assembly, homotetramer. Mg(2+) is required as a cofactor.

It is found in the plastid. Its subcellular location is the chloroplast. The enzyme catalyses beta-D-fructose 1,6-bisphosphate + H2O = beta-D-fructose 6-phosphate + phosphate. The protein operates within carbohydrate biosynthesis; Calvin cycle. The protein is Fructose-1,6-bisphosphatase, chloroplastic (FBP) of Glycine max (Soybean).